The sequence spans 405 residues: Prostaglandin E2 receptor EP1 subtype (405 aa).

At 1-39 (MSPCGLNLSLADEAATCATPRLPNTSVVLPTGDNGTSPA) the chain is on the extracellular side. Residues N7, N24, and N34 are each glycosylated (N-linked (GlcNAc...) asparagine). A helical transmembrane segment spans residues 40–62 (LPIFSMTLGAVSNVLALALLAQV). Residues 63–80 (AGRMRRRRSAATFLLFVA) are Cytoplasmic-facing. A helical transmembrane segment spans residues 81 to 99 (SLLAIDLAGHVIPGALVLR). Over 100–113 (LYTAGRAPAGGACH) the chain is Extracellular. C112 and C190 are disulfide-bonded. Residues 114 to 135 (FLGGCMVFFGLCPLLLGCGMAV) form a helical membrane-spanning segment. Residues 136-157 (ERCVGVTQPLIHAARVSVARAR) lie on the Cytoplasmic side of the membrane. A helical membrane pass occupies residues 158-179 (LALAVLAAMALAVALLPLVHVG). At 180–202 (RYELQYPGTWCFISLGPRGGWRQ) the chain is on the extracellular side. A helical membrane pass occupies residues 203 to 228 (ALLAGLFAGLGLAALLAALVCNTLSG). Over 229 to 301 (LALLRARWRR…HAHDVEMVGQ (73 aa)) the chain is Cytoplasmic. The segment at 243-287 (RFRKTAGPDDRRRWGSRGPRLASASSASSITSATATLRSSRGGGS) is disordered. A compositionally biased stretch (low complexity) spans 262–282 (RLASASSASSITSATATLRSS). The helical transmembrane segment at 302–323 (LVGIMVVSCICWSPLLVLVVLA) threads the bilayer. Residues 324-337 (IGGWNSNSLQRPLF) lie on the Extracellular side of the membrane. Residues 338-357 (LAVRLASWNQILDPWVYILL) traverse the membrane as a helical segment. The Cytoplasmic portion of the chain corresponds to 358–405 (RQAMLRQLLRLLPLRVSAKGGPTELGLTKSAWEASSLRSSRHSGFSHL).

It belongs to the G-protein coupled receptor 1 family. Post-translationally, phosphorylated. Abundant in kidney and in a lesser amount in lung.

It is found in the cell membrane. In terms of biological role, receptor for prostaglandin E2 (PGE2). The activity of this receptor is mediated by G(q) proteins which activate a phosphatidylinositol-calcium second messenger system. May play a role as an important modulator of renal function. Implicated the smooth muscle contractile response to PGE2 in various tissues. The polypeptide is Prostaglandin E2 receptor EP1 subtype (Ptger1) (Mus musculus (Mouse)).